We begin with the raw amino-acid sequence, 1079 residues long: Electrogenic sodium bicarbonate cotransporter 1 (1079 aa).

Residues 1 to 62 (MEDEAVLDRG…EKKEKERISE (62 aa)) are required for interaction with AHCYL1. At 1-466 (MEDEAVLDRG…FASDFYDALN (466 aa)) the chain is on the cytoplasmic side. Glu-2 is modified (phosphoserine). Tyr-30 carries the phosphotyrosine modification. A compositionally biased stretch (basic residues) spans 39-52 (YRRRRRHKRKAGHK). The segment at 39-78 (YRRRRRHKRKAGHKEKKEKERISENYSDKSDVENADESSS) is disordered. Over residues 53–70 (EKKEKERISENYSDKSDV) the composition is skewed to basic and acidic residues. Phosphoserine occurs at positions 61, 65, 68, 223, 232, 233, and 245. The tract at residues 235–266 (SRMFSNPDNGSPAMTHRNLTSSSLNDISDKPE) is disordered. 2 positions are modified to phosphothreonine: Thr-249 and Thr-254. Residues 251-260 (RNLTSSSLND) show a composition bias toward polar residues. Ser-256, Ser-257, and Ser-262 each carry phosphoserine. The chain crosses the membrane as a helical span at residues 467–491 (IQALSAILFIYLATVTNAITFGGLL). The Extracellular portion of the chain corresponds to 492–501 (GDATDNMQGV). Residues 502–520 (LESFLGTAVSGAIFCLFAG) form a helical membrane-spanning segment. Residue Gln-521 is a topological domain, cytoplasmic. Residues 522 to 542 (PLTILSSTGPVLVFERLLFNF) traverse the membrane as a discontinuously helical segment. Topologically, residues 543–550 (SKDHSFDY) are extracellular. A helical membrane pass occupies residues 551-571 (LEFRLWIGLWSAFMCLILVAT). The Cytoplasmic portion of the chain corresponds to 572-585 (DASFLVQYFTRFTE). The chain crosses the membrane as a helical span at residues 586–609 (EGFSSLISFIFIYDAFKKMIKLAD). Ile-597 and Phe-617 each carry an N-linked (GlcNAc) asparagine glycan. Residues 610–692 (YYPINSDFRV…GNNCDFVPDI (83 aa)) are Extracellular-facing. A helical transmembrane segment spans residues 693-710 (TLMSFILFLGTYTSSMAM). Over 711–725 (KKFKTSRYFPTTARK) the chain is Cytoplasmic. The helical transmembrane segment at 726-745 (LISDFAIILSILIFCVIDAL) threads the bilayer. Over 746 to 779 (VGVDTPKLIVPSEFKPTSPHRGWFVPPFGGNPWW) the chain is Extracellular. The interval 748–779 (VDTPKLIVPSEFKPTSPHRGWFVPPFGGNPWW) is interaction with CA4. The chain crosses the membrane as a helical span at residues 780-807 (VCLAAAIPALLVTILIFMDQQITAVIVN). The Cytoplasmic portion of the chain corresponds to 808–819 (RKEHKLKKGAGY). A helical transmembrane segment spans residues 820-836 (HLDLFWVAILMVVCSFM). Position 837 (Ala-837) is a topological domain, extracellular. A discontinuously helical transmembrane segment spans residues 838–855 (LPWYVAATVISIAHIDSL). The Cytoplasmic segment spans residues 856-877 (KMETETSAPGEQPKFLGVREQR). The chain crosses the membrane as a helical span at residues 878–894 (VTGTLVFILTGLSVFMA). The Extracellular portion of the chain corresponds to 895–901 (PILKFIP). The chain crosses the membrane as a helical span at residues 902–918 (MPVLYGVFLYMGVASLN). Residues 919–960 (GVQFMDRLKLLLMPLKHQPDFIYLRHVPLRRVHLFTSLQVLC) lie on the Cytoplasmic side of the membrane. An intramembrane region (discontinuously helical) is located at residues 961–986 (LALLWILKSTVAAIIFPVMILALVAV). Over 987–1079 (RKGMDYLFSQ…STFLERHTSC (93 aa)) the chain is Cytoplasmic. The CA2-binding stretch occupies residues 1002-1004 (LDD). Positions 1012–1079 (KKKEDEKKKK…STFLERHTSC (68 aa)) are disordered. 2 positions are modified to phosphoserine: Ser-1026 and Ser-1029. The residue at position 1026 (Ser-1026) is a Phosphoserine; by PKA. The CA2-binding stretch occupies residues 1030–1033 (DNDD). Phosphoserine is present on residues Ser-1034 and Ser-1044. The required for basolateral targeting stretch occupies residues 1057–1059 (FLS). Residues Asp-1060, Leu-1064, Ser-1069, and Ser-1078 each carry the phosphoserine modification. The segment covering 1062–1079 (KPLDRERSSTFLERHTSC) has biased composition (basic and acidic residues).

The protein belongs to the anion exchanger (TC 2.A.31) family. Homodimer. Interacts with CA2/carbonic anhydrase 2 and CA4/carbonic anhydrase 4 which may regulate transporter activity. Isoform 1 but not isoform 2 interacts with AHCYL1 (via PEST domain when phosphorylated); the interaction increases SLC4A4 isoform 1 activity. Interacts with AHCYL2. Post-translationally, phosphorylation of Ser-1026 by PKA increases the binding of CA2 and changes the Na(+):HCO3(-) stoichiometry of the transporter from 3:1 to 2:1. Phosphorylated in presence of STK39 and dephosphorylated in presence of PP1 phosphatase; phosphorylation seems to inhibit SLC4A4 activity. In terms of processing, N-glycosylation is not necessary for the transporter basic functions. As to expression, specifically expressed in kidney and to a lower extent in liver, lung, spleen, brain, skeletal muscle and heart. In kidney, expressed in proximal tubules at the corticomedullary junction. Isoform 2 is specifically expressed in kidney. Isoform 1 is expressed in kidney and pancreas while isoform 3 is specifically expressed in brain (at protein level). In brain, isoform 1 is expressed in astrocytes while isoform 3 is expressed in neurons (at protein level). In the eye, isoform 1 is expressed in cornea, conjunctiva, lens epithelium, ciliary bodies and retina while isoform 2 is detected only in the conjunctiva.

Its subcellular location is the basolateral cell membrane. The protein resides in the cell membrane. It catalyses the reaction 2 hydrogencarbonate(out) + Na(+)(out) = 2 hydrogencarbonate(in) + Na(+)(in). The enzyme catalyses 3 hydrogencarbonate(out) + Na(+)(out) = 3 hydrogencarbonate(in) + Na(+)(in). Its activity is regulated as follows. Inhibited by 4,4'-diisothiocyanatostilbene-2,2'-disulfonic acid (DIDS). Its function is as follows. Electrogenic sodium/bicarbonate cotransporter with a Na(+):HCO3(-) stoichiometry varying from 1:2 to 1:3. May regulate bicarbonate influx/efflux at the basolateral membrane of cells and regulate intracellular pH. The polypeptide is Electrogenic sodium bicarbonate cotransporter 1 (Slc4a4) (Rattus norvegicus (Rat)).